A 369-amino-acid chain; its full sequence is Anhydro-N-acetylmuramic acid kinase (369 aa).

12 to 19 contacts ATP; the sequence is GTSMDGVD.

It belongs to the anhydro-N-acetylmuramic acid kinase family.

It catalyses the reaction 1,6-anhydro-N-acetyl-beta-muramate + ATP + H2O = N-acetyl-D-muramate 6-phosphate + ADP + H(+). It functions in the pathway amino-sugar metabolism; 1,6-anhydro-N-acetylmuramate degradation. Its pathway is cell wall biogenesis; peptidoglycan recycling. Functionally, catalyzes the specific phosphorylation of 1,6-anhydro-N-acetylmuramic acid (anhMurNAc) with the simultaneous cleavage of the 1,6-anhydro ring, generating MurNAc-6-P. Is required for the utilization of anhMurNAc either imported from the medium or derived from its own cell wall murein, and thus plays a role in cell wall recycling. This Shewanella baltica (strain OS223) protein is Anhydro-N-acetylmuramic acid kinase.